The primary structure comprises 783 residues: Centrosomal protein of 89 kDa (783 aa).

Residues 28–49 are disordered; sequence PKAAVPRTPPPRSPNPSPERPR. Residues 34–45 are compositionally biased toward pro residues; that stretch reads RTPPPRSPNPSP. S50 bears the Phosphoserine mark. Disordered stretches follow at residues 63-157 and 176-226; these read GRTV…DDLY and DENI…DITG. Over residues 94–107 the composition is skewed to polar residues; sequence ATTSQLRPRPNWQS. Basic and acidic residues-rich tracts occupy residues 139–155 and 196–214; these read ELGD…HSDD and QQKD…KPPL. 2 coiled-coil regions span residues 234–333 and 369–719; these read EITR…SRYQ and LLLA…GELE.

It localises to the cytoplasm. Its subcellular location is the cytosol. It is found in the cytoskeleton. The protein localises to the microtubule organizing center. The protein resides in the centrosome. It localises to the spindle pole. Its subcellular location is the centriole. It is found in the mitochondrion intermembrane space. Functionally, required for ciliogenesis. Also plays a role in mitochondrial metabolism where it may modulate complex IV activity. The polypeptide is Centrosomal protein of 89 kDa (CEP89) (Homo sapiens (Human)).